The following is a 422-amino-acid chain: Phosphoserine aminotransferase 2, chloroplastic (422 aa).

The transit peptide at 1 to 50 (MAASTNSFLIGNQTQIPSLKPKSISQSFIHFTKPNTINLTTRTKSVSIRC) directs the protein to the chloroplast. A51 bears the N-acetylalanine mark. Residue R101 coordinates L-glutamate. Pyridoxal 5'-phosphate contacts are provided by residues 135–136 (AT), W161, T211, D233, and Q256. Residue K257 is modified to N6-(pyridoxal phosphate)lysine. 298-299 (NT) provides a ligand contact to pyridoxal 5'-phosphate.

The protein belongs to the class-V pyridoxal-phosphate-dependent aminotransferase family. SerC subfamily. The cofactor is pyridoxal 5'-phosphate.

It is found in the plastid. The protein localises to the chloroplast. It catalyses the reaction O-phospho-L-serine + 2-oxoglutarate = 3-phosphooxypyruvate + L-glutamate. The enzyme catalyses 4-(phosphooxy)-L-threonine + 2-oxoglutarate = (R)-3-hydroxy-2-oxo-4-phosphooxybutanoate + L-glutamate. Its pathway is amino-acid biosynthesis; L-serine biosynthesis; L-serine from 3-phospho-D-glycerate: step 2/3. Involved in the plastidial phosphorylated pathway of serine biosynthesis (PPSB). Catalyzes the reversible conversion of 3-phosphohydroxypyruvate to phosphoserine. This Arabidopsis thaliana (Mouse-ear cress) protein is Phosphoserine aminotransferase 2, chloroplastic (PSAT2).